The chain runs to 224 residues: ATP phosphoribosyltransferase (224 aa).

This sequence belongs to the ATP phosphoribosyltransferase family. Short subfamily. Heteromultimer composed of HisG and HisZ subunits.

The protein resides in the cytoplasm. It catalyses the reaction 1-(5-phospho-beta-D-ribosyl)-ATP + diphosphate = 5-phospho-alpha-D-ribose 1-diphosphate + ATP. It functions in the pathway amino-acid biosynthesis; L-histidine biosynthesis; L-histidine from 5-phospho-alpha-D-ribose 1-diphosphate: step 1/9. Its function is as follows. Catalyzes the condensation of ATP and 5-phosphoribose 1-diphosphate to form N'-(5'-phosphoribosyl)-ATP (PR-ATP). Has a crucial role in the pathway because the rate of histidine biosynthesis seems to be controlled primarily by regulation of HisG enzymatic activity. The sequence is that of ATP phosphoribosyltransferase from Cupriavidus taiwanensis (strain DSM 17343 / BCRC 17206 / CCUG 44338 / CIP 107171 / LMG 19424 / R1) (Ralstonia taiwanensis (strain LMG 19424)).